The chain runs to 443 residues: MESLSALYKNHIVTLQERTRDVLARFQMDALLIHSGELVNVFLDDHPYPFKVNPQFKAWVPVTQVPNCWLLVDGVNKPKLWFYLPVDYWHNVEPLPTAFWTEEVDVIALPKADGIGSQLPAARGNIGYIGPVPERALGLGIAADKINPKGVIDYLHYYRAYKTDYELACMREAQKSAVNGHRAAYEAFQSGMSEFDINQAYLTATGHRDTDVPYSNIVALNEHASVLHYTKLDHRAPAEMRSFLLDAGAEYNGYAADLTRTWAAHGDNDFAHLIKDVNDEQLALISTMKAGTRYVDYHIQFHQRIAKLLRKHQLVTDMSEEAMVENDLTGPFMPHGIGHPLGLQVHDVAGFMQDDTGTHLAAPSKYPYLRCTRIIEPRMVLTIEPGIYFIESLLAPWREGPFSKHFNWQKIDAMKPFGGIRIEDNVVVHENSIENMTRDLKLA.

The Mn(2+) site is built by D246, D257, H339, E384, and E423.

The protein belongs to the peptidase M24B family. Bacterial-type prolidase subfamily. Mn(2+) serves as cofactor.

It catalyses the reaction Xaa-L-Pro dipeptide + H2O = an L-alpha-amino acid + L-proline. In terms of biological role, splits dipeptides with a prolyl residue in the C-terminal position. The sequence is that of Xaa-Pro dipeptidase from Klebsiella pneumoniae (strain 342).